Here is a 66-residue protein sequence, read N- to C-terminus: Conotoxin Cal6.38 (66 aa).

An N-terminal signal peptide occupies residues 1 to 22; it reads MKLTFVLIVAVLVLAVCNFTVA. Intrachain disulfides connect Cys38–Cys55, Cys45–Cys59, and Cys54–Cys64.

Belongs to the conotoxin O1 superfamily. Expressed by the venom duct.

Its subcellular location is the secreted. Functionally, probable neurotoxin. In Californiconus californicus (California cone), this protein is Conotoxin Cal6.38.